Here is a 152-residue protein sequence, read N- to C-terminus: Protein-export protein SecB (152 aa).

Belongs to the SecB family. Homotetramer, a dimer of dimers. One homotetramer interacts with 1 SecA dimer.

The protein localises to the cytoplasm. In terms of biological role, one of the proteins required for the normal export of preproteins out of the cell cytoplasm. It is a molecular chaperone that binds to a subset of precursor proteins, maintaining them in a translocation-competent state. It also specifically binds to its receptor SecA. The sequence is that of Protein-export protein SecB from Acinetobacter baumannii (strain AB307-0294).